The following is a 131-amino-acid chain: Holin-like protein CidA (131 aa).

4 helical membrane passes run 4-24 (VQLI…TYIG), 30-50 (IFHL…LLLQ), 65-85 (FLLK…MDVA), and 88-108 (ITLN…IVAL).

The protein belongs to the CidA/LrgA family. CidA subfamily.

It localises to the cell membrane. In terms of biological role, increases the activity of extracellular murein hydrolases possibly by mediating their export via hole formation. Inhibited by the antiholin-like proteins LrgAB. In an unstressed cell, the LrgAB products probably inhibit the function of the CidAB proteins. When a cell is stressed by the addition of antibiotics or by other factors in the environment, the CidAB proteins possibly oligomerize within the bacterial cell membrane, creating lesions that disrupt the proton motive force, which in turn results in loss of cell viability. These lesions are also hypothesized to regulate the subsequent cell lysis by either allowing the murein hydrolases access to the cell wall substrate and/or regulating their activity by a possible change in the cell wall pH that results from loss of membrane potential. The chain is Holin-like protein CidA from Staphylococcus aureus (strain Mu3 / ATCC 700698).